The sequence spans 779 residues: Serine/threonine-protein kinase SIK1 (779 aa).

Residues 27–278 (YDVERTLGKG…IAQIRQHRWM (252 aa)) enclose the Protein kinase domain. Residues 33 to 41 (LGKGNFAVV) and Lys-56 contribute to the ATP site. Catalysis depends on Asp-149, which acts as the Proton acceptor. The residue at position 182 (Thr-182) is a Phosphothreonine; by LKB1 and GSK3-beta. Phosphoserine; by autocatalysis is present on Ser-186. Positions 303–343 (DYNEQVLGIMQALGIDRQRTIESLQNSSYNHFAAIYYLLLE) constitute a UBA domain. A Phosphothreonine; by CaMK1 modification is found at Thr-322. Disordered regions lie at residues 350 to 375 (SAQP…LSSL) and 449 to 472 (EARQ…STGR). Residues 363–373 (RQPQLRSSDLS) are compositionally biased toward polar residues. The residue at position 577 (Ser-577) is a Phosphoserine; by PKA. An RK-rich region region spans residues 586–612 (KAFRQQLRKNARTKGFLGLNKIKGLAR). A disordered region spans residues 621-641 (TPRGGMSTFHTPAPSSGLQGC). The span at 628-641 (TFHTPAPSSGLQGC) shows a compositional bias: polar residues.

The protein belongs to the protein kinase superfamily. CAMK Ser/Thr protein kinase family. AMPK subfamily. Interacts (when phosphorylated on Thr-182 and Ser-186) with YWHAZ. Interacts with ATP1A1. Requires Mg(2+) as cofactor. In terms of processing, phosphorylated at Thr-182 by STK11/LKB1 in complex with STE20-related adapter-alpha (STRADA) pseudo kinase and CAB39, leading to its activation. Phosphorylation at Thr-182 promotes autophosphorylation at Ser-186, which is required for sustained activity. Autophosphorylation at Ser-186 is maintained by sequential phosphorylation at Thr-182 by GSK3-beta. GSK3-beta cannot initiate phosphorylation at Thr-182, it can only maintain it. Phosphorylation at Ser-577 by PKA promotes translocation to the cytoplasm. Phosphorylation at Thr-322 by CaMK1 following intracellular sodium concentration leads to activation. In terms of tissue distribution, expressed in lung, skin, ovary, heart and stomach. No expression in brain, liver or adult skeletal muscle but is present in skeletal muscle progenitor cells of the somite beginning at 9.5 dpc. Present at 8.0 dpc in the monolayer of presumptive myocardial cells but rapidly down-regulated at 8.5 dpc upon primitive ventricle formation, although still present in myocardial cells that will populate the primitive atrium and bulbus cordis. At 9.5 dpc expression is down-regulated in the primitive atrium but observed in the sinus venosus and truncus arteriosus.

It localises to the cytoplasm. The protein resides in the nucleus. The enzyme catalyses L-seryl-[protein] + ATP = O-phospho-L-seryl-[protein] + ADP + H(+). It carries out the reaction L-threonyl-[protein] + ATP = O-phospho-L-threonyl-[protein] + ADP + H(+). With respect to regulation, activated by phosphorylation on Thr-182. Also activated by phosphorylation on Thr-322 in response to increases in intracellular sodium in parallel with elevations in intracellular calcium through the reversible sodium/calcium exchanger. Serine/threonine-protein kinase involved in various processes such as cell cycle regulation, gluconeogenesis and lipogenesis regulation, muscle growth and differentiation and tumor suppression. Phosphorylates HDAC4, HDAC5, PPME1, SREBF1, CRTC1/TORC1 and CRTC2/TORC2. Acts as a tumor suppressor and plays a key role in p53/TP53-dependent anoikis, a type of apoptosis triggered by cell detachment: required for phosphorylation of p53/TP53 in response to loss of adhesion and is able to suppress metastasis. Part of a sodium-sensing signaling network, probably by mediating phosphorylation of PPME1: following increases in intracellular sodium, SIK1 is activated by CaMK1 and phosphorylates PPME1 subunit of protein phosphatase 2A (PP2A), leading to dephosphorylation of sodium/potassium-transporting ATPase ATP1A1 and subsequent increase activity of ATP1A1. Acts as a regulator of muscle cells by phosphorylating and inhibiting class II histone deacetylases HDAC4 and HDAC5, leading to promote expression of MEF2 target genes in myocytes. Also required during cardiomyogenesis by regulating the exit of cardiomyoblasts from the cell cycle via down-regulation of CDKN1C/p57Kip2. Acts as a regulator of hepatic gluconeogenesis by phosphorylating and repressing the CREB-specific coactivators CRTC1/TORC1 and CRTC2/TORC2, leading to inhibit CREB activity. Also regulates hepatic lipogenesis by phosphorylating and inhibiting SREBF1. In concert with CRTC1/TORC1, regulates the light-induced entrainment of the circadian clock by attenuating PER1 induction; represses CREB-mediated transcription of PER1 by phosphorylating and deactivating CRTC1/TORC1. This chain is Serine/threonine-protein kinase SIK1 (Sik1), found in Mus musculus (Mouse).